The primary structure comprises 386 residues: Cytochrome b (386 aa).

The next 4 helical transmembrane spans lie at 32-52, 76-98, 113-133, and 179-199; these read TGSL…FTAM, YLIR…GHIG, VWVI…TGYC, and FFAL…MHLM. Heme b-binding residues include H82 and H96. Residues H183 and H197 each contribute to the heme b site. H202 contacts a ubiquinone. 4 consecutive transmembrane segments (helical) span residues 225–245, 289–309, 321–341, and 348–368; these read FVFK…TFVF, LGGV…PVTD, FSKT…QLGQ, and FIEM…VLVP.

It belongs to the cytochrome b family. Fungal cytochrome b-c1 complex contains 10 subunits; 3 respiratory subunits, 2 core proteins and 5 low-molecular weight proteins. Cytochrome b-c1 complex is a homodimer. It depends on heme b as a cofactor.

It localises to the mitochondrion inner membrane. Component of the ubiquinol-cytochrome c reductase complex (complex III or cytochrome b-c1 complex) that is part of the mitochondrial respiratory chain. The b-c1 complex mediates electron transfer from ubiquinol to cytochrome c. Contributes to the generation of a proton gradient across the mitochondrial membrane that is then used for ATP synthesis. The protein is Cytochrome b (COB) of Wickerhamomyces pijperi (Yeast).